Consider the following 392-residue polypeptide: Cell division protein DivIB (392 aa).

The tract at residues 1–88 (MSEKDNNLTP…TQSSEAPIEN (88 aa)) is disordered. Over 1–131 (MSEKDNNLTP…KGSAPLLKKM (131 aa)) the chain is Cytoplasmic. The segment covering 14–32 (KHLEYQKRKAEEAKKEKKA) has biased composition (basic and acidic residues). Residues 58–76 (TRDEAESAELLEEGFETNN) are compositionally biased toward acidic residues. Residues 132 to 152 (WPALAVVVLVFVGSLYLISPL) form a helical membrane-spanning segment. The POTRA domain maps to 153-224 (SKISTFSVSG…NRFEAIVKEH (72 aa)). Topologically, residues 153 to 392 (SKISTFSVSG…TAQSTTTSSN (240 aa)) are extracellular. The tract at residues 368–392 (ISAQNAKKTDASSENTAQSTTTSSN) is disordered.

The protein belongs to the FtsQ/DivIB family. DivIB subfamily.

It is found in the cell membrane. Cell division protein that may be involved in stabilizing or promoting the assembly of the division complex. This is Cell division protein DivIB from Lactococcus lactis subsp. lactis (strain KF147).